A 157-amino-acid polypeptide reads, in one-letter code: 17.8 kDa class I heat shock protein (157 aa).

The region spanning 43–157 is the sHSP domain; that stretch reads ETAAFVNTHI…PEVKAIDISG (115 aa).

This sequence belongs to the small heat shock protein (HSP20) family. As to quaternary structure, forms oligomeric structures.

The protein localises to the cytoplasm. The chain is 17.8 kDa class I heat shock protein from Daucus carota (Wild carrot).